The following is a 382-amino-acid chain: Nonsense-mediated mRNA decay factor SMG9 (382 aa).

The interval 1–66 is disordered; that stretch reads MKKVEILKTP…PDSSVSKSSG (66 aa).

It belongs to the SMG9 family.

Its function is as follows. Involved in nonsense-mediated decay (NMD) of mRNAs containing premature stop codons. Probable component of kinase complex containing smg-1 and recruited to stalled ribosomes. The polypeptide is Nonsense-mediated mRNA decay factor SMG9 (smg-9) (Caenorhabditis briggsae).